A 314-amino-acid polypeptide reads, in one-letter code: tRNA pseudouridine synthase B (314 aa).

Residue Asp-54 is the Nucleophile of the active site.

Belongs to the pseudouridine synthase TruB family. Type 1 subfamily.

It carries out the reaction uridine(55) in tRNA = pseudouridine(55) in tRNA. In terms of biological role, responsible for synthesis of pseudouridine from uracil-55 in the psi GC loop of transfer RNAs. This is tRNA pseudouridine synthase B from Cupriavidus metallidurans (strain ATCC 43123 / DSM 2839 / NBRC 102507 / CH34) (Ralstonia metallidurans).